The chain runs to 106 residues: Large ribosomal subunit protein uL24 (106 aa).

Belongs to the universal ribosomal protein uL24 family. As to quaternary structure, part of the 50S ribosomal subunit.

Its function is as follows. One of two assembly initiator proteins, it binds directly to the 5'-end of the 23S rRNA, where it nucleates assembly of the 50S subunit. One of the proteins that surrounds the polypeptide exit tunnel on the outside of the subunit. This chain is Large ribosomal subunit protein uL24, found in Acinetobacter baylyi (strain ATCC 33305 / BD413 / ADP1).